The chain runs to 397 residues: Carnitine transport ATP-binding protein OpuCA (397 aa).

The ABC transporter domain maps to Leu-2–Ile-236. ATP is bound at residue Gly-35–Thr-42. CBS domains are found at residues Met-255 to Val-311 and Ile-315 to Leu-373. Residues Thr-377–Gly-397 are disordered. The segment covering Ala-384–Gly-397 has biased composition (basic and acidic residues).

Belongs to the ABC transporter superfamily. In terms of assembly, the complex is composed of two ATP-binding proteins (OpuCA), two transmembrane proteins (OpuCB and OpuCD) and a solute-binding protein (OpuCC).

It carries out the reaction a quaternary ammonium(out) + ATP + H2O = a quaternary ammonium(in) + ADP + phosphate + H(+). Its function is as follows. Part of the ABC transporter complex OpuCABCD involved in carnitine uptake. Probably responsible for energy coupling to the transport system. Involved, with BetL and GbuABC, in osmoprotection and cryoprotection of Listeria. Can also mediate weak glycine betaine transport. The chain is Carnitine transport ATP-binding protein OpuCA (opuCA) from Listeria monocytogenes serotype 1/2a (strain 10403S).